Here is a 478-residue protein sequence, read N- to C-terminus: Aspartyl/glutamyl-tRNA(Asn/Gln) amidotransferase subunit B 2 (478 aa).

This sequence belongs to the GatB/GatE family. GatB subfamily. Heterotrimer of A, B and C subunits.

The enzyme catalyses L-glutamyl-tRNA(Gln) + L-glutamine + ATP + H2O = L-glutaminyl-tRNA(Gln) + L-glutamate + ADP + phosphate + H(+). It catalyses the reaction L-aspartyl-tRNA(Asn) + L-glutamine + ATP + H2O = L-asparaginyl-tRNA(Asn) + L-glutamate + ADP + phosphate + 2 H(+). Functionally, allows the formation of correctly charged Asn-tRNA(Asn) or Gln-tRNA(Gln) through the transamidation of misacylated Asp-tRNA(Asn) or Glu-tRNA(Gln) in organisms which lack either or both of asparaginyl-tRNA or glutaminyl-tRNA synthetases. The reaction takes place in the presence of glutamine and ATP through an activated phospho-Asp-tRNA(Asn) or phospho-Glu-tRNA(Gln). This chain is Aspartyl/glutamyl-tRNA(Asn/Gln) amidotransferase subunit B 2 (gatB2), found in Clostridium acetobutylicum (strain ATCC 824 / DSM 792 / JCM 1419 / IAM 19013 / LMG 5710 / NBRC 13948 / NRRL B-527 / VKM B-1787 / 2291 / W).